The sequence spans 1486 residues: Chromosome partition protein MukB (1486 aa).

34 to 41 (GGNGAGKS) contributes to the ATP binding site. Coiled-coil stretches lie at residues 326 to 418 (LEAD…QYNQ), 444 to 480 (LETF…QAYQ), and 509 to 603 (RHLA…RAPV). The interval 666 to 783 (PGGSEDQRLN…EVPLFGRAAR (118 aa)) is flexible hinge. Coiled coils occupy residues 835–923 (EAEI…AKLE), 977–1115 (EMLS…TAKA), and 1209–1266 (VEAI…QNVS).

Belongs to the SMC family. MukB subfamily. Homodimerization via its hinge domain. Binds to DNA via its C-terminal region. Interacts, and probably forms a ternary complex, with MukE and MukF via its C-terminal region. The complex formation is stimulated by calcium or magnesium. Interacts with tubulin-related protein FtsZ.

The protein localises to the cytoplasm. It is found in the nucleoid. Its function is as follows. Plays a central role in chromosome condensation, segregation and cell cycle progression. Functions as a homodimer, which is essential for chromosome partition. Involved in negative DNA supercoiling in vivo, and by this means organize and compact chromosomes. May achieve or facilitate chromosome segregation by condensation DNA from both sides of a centrally located replisome during cell division. This Shigella boydii serotype 4 (strain Sb227) protein is Chromosome partition protein MukB.